A 270-amino-acid polypeptide reads, in one-letter code: Putative phosphoenolpyruvate synthase regulatory protein (270 aa).

150-157 contributes to the ADP binding site; sequence GVSRCGKT.

It belongs to the pyruvate, phosphate/water dikinase regulatory protein family. PSRP subfamily.

It carries out the reaction [pyruvate, water dikinase] + ADP = [pyruvate, water dikinase]-phosphate + AMP + H(+). The catalysed reaction is [pyruvate, water dikinase]-phosphate + phosphate + H(+) = [pyruvate, water dikinase] + diphosphate. Its function is as follows. Bifunctional serine/threonine kinase and phosphorylase involved in the regulation of the phosphoenolpyruvate synthase (PEPS) by catalyzing its phosphorylation/dephosphorylation. The polypeptide is Putative phosphoenolpyruvate synthase regulatory protein (Shewanella sediminis (strain HAW-EB3)).